Reading from the N-terminus, the 208-residue chain is Ribosomal RNA small subunit methyltransferase G (208 aa).

S-adenosyl-L-methionine contacts are provided by residues G74, L79, 125–126, and R140; that span reads VE.

Belongs to the methyltransferase superfamily. RNA methyltransferase RsmG family.

It localises to the cytoplasm. It carries out the reaction guanosine(527) in 16S rRNA + S-adenosyl-L-methionine = N(7)-methylguanosine(527) in 16S rRNA + S-adenosyl-L-homocysteine. Its function is as follows. Specifically methylates the N7 position of guanine in position 527 of 16S rRNA. This chain is Ribosomal RNA small subunit methyltransferase G, found in Shewanella denitrificans (strain OS217 / ATCC BAA-1090 / DSM 15013).